A 789-amino-acid chain; its full sequence is Aryl hydrocarbon receptor nuclear translocator (789 aa).

Polar residues predominate over residues 1–14; the sequence is MAATTANPEMTSDV. Residues 1 to 97 are disordered; that stretch reads MAATTANPEM…RLARENHSEI (97 aa). Position 2 is an N-acetylalanine (alanine 2). The segment covering 26–35 has biased composition (gly residues); the sequence is SGPGIQGGGA. Lysine 58 is covalently cross-linked (Glycyl lysine isopeptide (Lys-Gly) (interchain with G-Cter in SUMO2)). A compositionally biased stretch (basic and acidic residues) spans 60-97; that stretch reads LRCDDDQMSNDKERFARSDDEQSSADKERLARENHSEI. Phosphoserine is present on serine 77. Residues 88–128 are DNA-binding; the sequence is RLARENHSEIERRRRNKMTAYITELSDMVPTCSALARKPDK. Positions 89 to 142 constitute a bHLH domain; that stretch reads LARENHSEIERRRRNKMTAYITELSDMVPTCSALARKPDKLTILRMAVSHMKSL. The segment at 112-168 is required for heterodimer formation with HIF1A; the sequence is LSDMVPTCSALARKPDKLTILRMAVSHMKSLRGTGNTSTDGSYKPSFLTDQELKHLI. Residues 112 to 264 form a required for heterodimer formation with EPAS1 region; it reads LSDMVPTCSA…MCMGSRRSFI (153 aa). PAS domains lie at 161–235 and 349–419; these read DQEL…LTGR and PNCT…VKLK. The mediates the transcription activity and dimerization of the AHR:ARNT complex stretch occupies residues 167-171; that stretch reads LILEA. Residues 424-467 enclose the PAC domain; it reads SVMFRFRSKNQEWLWMRTSSFTFQNPYSDEIEYIICTNTNVKNS. Residues 465-481 show a composition bias toward polar residues; it reads KNSSQEPRPTLSNTIQR. Disordered regions lie at residues 465–492 and 672–789; these read KNSS…NLPL and TPSS…PFSE. Residues 672–696 show a composition bias toward low complexity; that stretch reads TPSSFSSMSLPGAPTASPGAAAYPS. Residues 708-719 are compositionally biased toward polar residues; it reads TGQTAGQFQTRT. 2 stretches are compositionally biased toward low complexity: residues 723 to 733 and 743 to 756; these read VGVWPQWQGQQ and QHVQ…PGQP.

In terms of assembly, monomer. Homodimer only upon binding to a DNA. Efficient DNA binding requires dimerization with another bHLH protein. Interacts with TACC3. Interacts with HIF1A, EPAS1, NPAS1 and NPAS3; forms a heterodimer that binds core DNA sequence 5'-TACGTG-3' within the hypoxia response element (HRE) of target gene promoters. Forms a heterodimer with AHRR, as well as with other bHLH proteins. Interacts with NOCA7. Interacts with TACC3. Interacts with AHR; the heterodimer ARNT:AHR binds to core DNA sequence 5'-TGCGTG-3' within the dioxin response element (DRE) of target gene promoters and activates their transcription. Interacts with SIM1 and NPAS4.

Its subcellular location is the nucleus. Functionally, required for activity of the AHR. Upon ligand binding, AHR translocates into the nucleus, where it heterodimerizes with ARNT and induces transcription by binding to xenobiotic response elements (XRE). Not required for the ligand-binding subunit to translocate from the cytosol to the nucleus after ligand binding. The complex initiates transcription of genes involved in the regulation of a variety of biological processes, including angiogenesis, hematopoiesis, drug and lipid metabolism, cell motility and immune modulation. The heterodimer binds to core DNA sequence 5'-TACGTG-3' within the hypoxia response element (HRE) of target gene promoters and functions as a transcriptional regulator of the adaptive response to hypoxia. The heterodimer ARNT:AHR binds to core DNA sequence 5'-TGCGTG-3' within the dioxin response element (DRE) of target gene promoters and activates their transcription. This is Aryl hydrocarbon receptor nuclear translocator from Homo sapiens (Human).